The primary structure comprises 241 residues: Demethylmenaquinone methyltransferase (241 aa).

S-adenosyl-L-methionine-binding positions include threonine 68, aspartate 88, and 114 to 115 (DA).

Belongs to the class I-like SAM-binding methyltransferase superfamily. MenG/UbiE family.

It catalyses the reaction a 2-demethylmenaquinol + S-adenosyl-L-methionine = a menaquinol + S-adenosyl-L-homocysteine + H(+). It participates in quinol/quinone metabolism; menaquinone biosynthesis; menaquinol from 1,4-dihydroxy-2-naphthoate: step 2/2. In terms of biological role, methyltransferase required for the conversion of demethylmenaquinol (DMKH2) to menaquinol (MKH2). The protein is Demethylmenaquinone methyltransferase of Deinococcus radiodurans (strain ATCC 13939 / DSM 20539 / JCM 16871 / CCUG 27074 / LMG 4051 / NBRC 15346 / NCIMB 9279 / VKM B-1422 / R1).